Consider the following 124-residue polypeptide: Small ribosomal subunit protein uS13c (124 aa).

Residues 100–124 (GQRTRTNARTRKGKVKTAVAKKKGR) form a disordered region. Over residues 101–124 (QRTRTNARTRKGKVKTAVAKKKGR) the composition is skewed to basic residues.

The protein belongs to the universal ribosomal protein uS13 family. As to quaternary structure, part of the 30S ribosomal subunit.

It localises to the plastid. The protein resides in the chloroplast. Located at the top of the head of the 30S subunit, it contacts several helices of the 16S rRNA. The chain is Small ribosomal subunit protein uS13c from Emiliania huxleyi (Coccolithophore).